We begin with the raw amino-acid sequence, 217 residues long: Large ribosomal subunit protein uL1 (217 aa).

It belongs to the universal ribosomal protein uL1 family. As to quaternary structure, part of the 50S ribosomal subunit.

Its function is as follows. Binds directly to 23S rRNA. Probably involved in E site tRNA release. Functionally, protein L1 is also a translational repressor protein, it controls the translation of its operon by binding to its mRNA. In Aeropyrum pernix (strain ATCC 700893 / DSM 11879 / JCM 9820 / NBRC 100138 / K1), this protein is Large ribosomal subunit protein uL1.